We begin with the raw amino-acid sequence, 718 residues long: MMFRDQVGVLAGWFKGWNECEQTVALLSLLKRVSQTQARFLQLCLEHSLADCVELHVLEREANSPGIINQWQQESKDKVISLLLTHLPLLKPGNLDAKVEYMKLLPKILAHSIEHNQHIEESRQLLSYALIHPATSLEDRSALAMWLNHLEDRTSTSFGGQNRGRSDSVDYGQTHYYHQRQNSDDKLNGWQNSRDSGICINASNWQDKSMGCENGHVPLYSSSSVPTTINTIGTSTSTILSGQAHHSPLKRSVSLTPPMNVPNQPLGHGWMSHEDLRARGPQCLPSDHAPLSPQSSVASSGSGGSEHLEDQATARNTFQEEGSGMKDVPAWLKSLRLHKYAALFSQMTYEEMMALTECQLEAQNVTKGARHKIVISIQKLKERQNLLKSLERDIIEGGSLRVPLQELHQMILTPIKAYGSPSTTPEARPREPQAPRQPSLMGPESQSPDCKDGATATGATATPSAGASGGLQPHQLSSCDGELAVAPLPEGDLPGQFTRVMGKVCTQLLVSRPDEENISSYLQLIDKRLIHEAFTETQKKRLLSWKQQVQKLFRSFPRKTLLDISGYRQQRNRGFGQSDSLPTAGSMGSGMGRRNPRQYQIPSRNVPSARLGLLGTSGFVSSNQRNTTAAPTIMKQGRQNLWFANPGGSNSMPSRTHSSVQRTRSLPVHTSPQNMLMFQQPEFQLPVTEPDINNRLESLCLSMTEHALGDGVDRTSTI.

Residue serine 168 is modified to Phosphoserine. The segment at 278–310 (ARGPQCLPSDHAPLSPQSSVASSGSGGSEHLED) is disordered. An SAM domain is found at 323 to 396 (SGMKDVPAWL…LKSLERDIIE (74 aa)). 2 disordered regions span residues 417 to 474 (AYGS…LQPH) and 572 to 601 (NRGFGQSDSLPTAGSMGSGMGRRNPRQYQI). A Phosphoserine modification is found at serine 420. The residue at position 424 (threonine 424) is a Phosphothreonine. Over residues 453 to 466 (GATATGATATPSAG) the composition is skewed to low complexity. Arginine 573 carries the omega-N-methylarginine modification. Serine 580 carries the post-translational modification Phosphoserine.

Belongs to the SMAUG family.

Its subcellular location is the cytoplasm. It is found in the cell projection. The protein resides in the dendrite. It localises to the synapse. The protein localises to the synaptosome. Functionally, acts as a translational repressor of SRE-containing messengers. This is Protein Smaug homolog 1 (SAMD4A) from Macaca fascicularis (Crab-eating macaque).